Consider the following 202-residue polypeptide: Venom allergen 5 (202 aa).

Intrachain disulfides connect cysteine 4–cysteine 16, cysteine 8–cysteine 101, and cysteine 26–cysteine 94. Position 107 is a phosphotyrosine (tyrosine 107). Lysine 138 carries an N-linked (Glc) (glycation) lysine glycan. The cysteines at positions 168 and 185 are disulfide-linked.

This sequence belongs to the CRISP family. As to expression, expressed by the venom gland.

The protein localises to the secreted. Does not show toxicity when intravenously injected into mice tail. The polypeptide is Venom allergen 5 (Vespa velutina (Asian yellow-legged hornet)).